We begin with the raw amino-acid sequence, 713 residues long: Acetyl-coenzyme A synthetase 1 (713 aa).

Residues Met-1–Glu-39 form a disordered region. Over residues Lys-10–Lys-22 the composition is skewed to basic and acidic residues. CoA-binding positions include Arg-248–Lys-251 and Thr-367. ATP is bound by residues Gly-443–Pro-445, Asp-467–Thr-472, Asp-559, and Arg-574. An FACS motif is present at residues Pro-552 to Ile-600. Ser-582 contributes to the CoA binding site. Position 585 (Arg-585) interacts with ATP. Residue Arg-650 coordinates CoA. A Microbody targeting signal motif is present at residues Val-711 to Leu-713.

It belongs to the ATP-dependent AMP-binding enzyme family.

The protein resides in the microsome. It is found in the cytoplasm. Its subcellular location is the mitochondrion. The protein localises to the nucleus. The enzyme catalyses acetate + ATP + CoA = acetyl-CoA + AMP + diphosphate. In terms of biological role, catalyzes the production of acetyl-CoA. Provides the acetyl-CoA source for histone acetylation in the nucleus. 'Aerobic' isozyme of acetyl-coenzyme A synthetase, which supports growth on nonfermentable carbon sources such as glycerol and ethanol. May be required for assimilation of ethanol and acetate. The chain is Acetyl-coenzyme A synthetase 1 (ACS1) from Saccharomyces cerevisiae (strain ATCC 204508 / S288c) (Baker's yeast).